Consider the following 427-residue polypeptide: C4-dicarboxylate TRAP transporter large permease protein DctM (427 aa).

Helical transmembrane passes span 2-22, 55-75, 91-111, 115-135, 138-158, 171-191, 216-236, 237-257, 274-294, 310-330, 335-355, 359-379, and 396-416; these read TILF…PIAV, TLLA…GGVA, GGLA…SGSS, VAAV…PQAF, GIVC…VMVV, FIAG…VIYI, ALWG…GAFT, PTEA…FVYR, LTIM…VLTT, LSPW…GNFM, IILI…IDPI, IIMV…LNLF, and ALPW…IPAV.

This sequence belongs to the TRAP transporter large permease family. As to quaternary structure, the complex comprises the extracytoplasmic solute receptor protein DctP, and the two transmembrane proteins DctQ and DctM.

Its subcellular location is the cell inner membrane. Part of the tripartite ATP-independent periplasmic (TRAP) transport system DctPQM involved in C4-dicarboxylates uptake. The polypeptide is C4-dicarboxylate TRAP transporter large permease protein DctM (Pseudomonas aeruginosa (strain ATCC 15692 / DSM 22644 / CIP 104116 / JCM 14847 / LMG 12228 / 1C / PRS 101 / PAO1)).